The primary structure comprises 674 residues: Anosmin-1 (674 aa).

The signal sequence occupies residues 1–21; the sequence is MVRRAPGASLALLLWVTAVSC. 4 disulfides stabilise this stretch: cysteine 47/cysteine 71, cysteine 80/cysteine 99, cysteine 84/cysteine 95, and cysteine 110/cysteine 114. Asparagine 65 carries an N-linked (GlcNAc...) asparagine glycan. The WAP domain maps to 121–170; sequence LSVKQGDCPAPEKASGFAAACFESCEADSECSGVKKCCSNGCGHTCQVPK. 4 Fibronectin type-III domains span residues 180-281, 286-392, 418-515, and 545-652; these read PRKE…SKDP, APSN…TTQD, RRKP…FFVT, and KPEN…DLPP. N-linked (GlcNAc...) asparagine glycosylation is found at asparagine 203 and asparagine 294. The span at 388 to 402 shows a compositional bias: polar residues; it reads STTQDNRNNNEQTSV. The tract at residues 388–413 is disordered; that stretch reads STTQDNRNNNEQTSVEKPPKGVVDPY. N-linked (GlcNAc...) asparagine glycans are attached at residues asparagine 465, asparagine 548, and asparagine 559. A disordered region spans residues 655-674; the sequence is PHRPHLKHHPHRYKPPPEKY. Basic residues predominate over residues 656 to 668; it reads HRPHLKHHPHRYK.

Its subcellular location is the cell surface. May be an adhesion-like molecule with anti-protease activity. The sequence is that of Anosmin-1 from Coturnix japonica (Japanese quail).